A 243-amino-acid chain; its full sequence is Ubiquinone/menaquinone biosynthesis C-methyltransferase UbiE (243 aa).

Residues Thr-69, Asp-90, and 116–117 contribute to the S-adenosyl-L-methionine site; that span reads DA.

Belongs to the class I-like SAM-binding methyltransferase superfamily. MenG/UbiE family.

It carries out the reaction a 2-demethylmenaquinol + S-adenosyl-L-methionine = a menaquinol + S-adenosyl-L-homocysteine + H(+). The enzyme catalyses a 2-methoxy-6-(all-trans-polyprenyl)benzene-1,4-diol + S-adenosyl-L-methionine = a 5-methoxy-2-methyl-3-(all-trans-polyprenyl)benzene-1,4-diol + S-adenosyl-L-homocysteine + H(+). The protein operates within quinol/quinone metabolism; menaquinone biosynthesis; menaquinol from 1,4-dihydroxy-2-naphthoate: step 2/2. Its pathway is cofactor biosynthesis; ubiquinone biosynthesis. Functionally, methyltransferase required for the conversion of demethylmenaquinol (DMKH2) to menaquinol (MKH2) and the conversion of 2-polyprenyl-6-methoxy-1,4-benzoquinol (DDMQH2) to 2-polyprenyl-3-methyl-6-methoxy-1,4-benzoquinol (DMQH2). The chain is Ubiquinone/menaquinone biosynthesis C-methyltransferase UbiE from Cupriavidus necator (strain ATCC 17699 / DSM 428 / KCTC 22496 / NCIMB 10442 / H16 / Stanier 337) (Ralstonia eutropha).